The sequence spans 138 residues: uncharacterized protein (138 aa).

A run of 2 helical transmembrane segments spans residues 1 to 21 (MEIGYIFILAGFLVIALEAIV) and 46 to 66 (YAFISAIIAGVLTIIILHKFV).

The protein localises to the cell membrane. This is an uncharacterized protein from Methanocaldococcus jannaschii (strain ATCC 43067 / DSM 2661 / JAL-1 / JCM 10045 / NBRC 100440) (Methanococcus jannaschii).